We begin with the raw amino-acid sequence, 43 residues long: Protein PsbN (43 aa).

The chain crosses the membrane as a helical span at residues 5–27; sequence TLVTISISCLLVSFTGYAIYTSF.

It belongs to the PsbN family.

The protein localises to the plastid. Its subcellular location is the chloroplast thylakoid membrane. In terms of biological role, may play a role in photosystem I and II biogenesis. The protein is Protein PsbN of Welwitschia mirabilis (Tree tumbo).